Reading from the N-terminus, the 247-residue chain is Adiponectin (247 aa).

The first 17 residues, 1–17, serve as a signal peptide directing secretion; that stretch reads MLLLQALLFLLILPSHA. Thr23 and Thr24 each carry an O-linked (GalNAc...) threonine glycan. 5-hydroxylysine is present on Lys36. S-(2-succinyl)cysteine is present on Cys39. The tract at residues 44–105 is disordered; the sequence is AGIPGHPGHN…GFPGTPGRKG (62 aa). Positions 45–110 constitute a Collagen-like domain; it reads GIPGHPGHNG…PGRKGEPGEA (66 aa). Pro47, Pro50, and Pro56 each carry 4-hydroxyproline. Basic and acidic residues predominate over residues 58–73; the sequence is RDGRDGTPGEKGEKGD. 3 positions are modified to 5-hydroxylysine; alternate: Lys68, Lys71, and Lys80. Lys68, Lys71, and Lys80 each carry an O-linked (Gal...) hydroxylysine; alternate glycan. Pro94 is subject to 4-hydroxyproline. A 5-hydroxylysine; alternate modification is found at Lys104. Lys104 is a glycosylation site (O-linked (Gal...) hydroxylysine; alternate). The C1q domain occupies 111–247; sequence AYVYRSAFSV…TGFLLYHDTN (137 aa).

In terms of assembly, homomultimer. Forms trimers, hexamers and 12- to 18-mers. The trimers (low molecular weight complexes / LMW) are assembled via non-covalent interactions of the collagen-like domains in a triple helix and hydrophobic interactions within the globular C1q domain. Several trimers can associate to form disulfide-linked hexamers (middle molecular weight complexes / MMW) and larger complexes (higher molecular weight / HMW). The HMW-complex assembly is also modulated by the degree of lysine hydroxylation and glycosylation. LMW, MMW and HMW complexes bind to HBEGF, MMW and HMW complexes bind to PDGFB, and HMW complex binds to FGF2. Interacts with CTRP9 via the C1q domain (heterotrimeric complex). In terms of processing, HMW complexes are more extensively glycosylated than smaller oligomers. Hydroxylation and glycosylation of the lysine residues within the collagen-like domain of adiponectin seem to be critically involved in regulating the formation and/or secretion of HMW complexes and consequently contribute to the insulin-sensitizing activity of adiponectin in hepatocytes. O-glycosylated. Not N-glycosylated O-linked glycans on hydroxylysine residues consist of Glc-Gal disaccharides bound to the oxygen atom of post-translationally added hydroxyl groups. O-linked glycosylation in the N-terminal is disialylated with the structure Neu5Acalpha2-&gt;8Neu5Acalpha2-&gt;3Gal. Sialylated by alpha 2,8-sialyltransferase III. Post-translationally, succination of Cys-39 by the Krebs cycle intermediate fumarate, which leads to S-(2-succinyl)cysteine residues, inhibits polymerization and secretion of adiponectin. Adiponectin is a major target for succination in both adipocytes and adipose tissue of diabetic mice. It was proposed that succination of proteins is a biomarker of mitochondrial stress and accumulation of Krebs cycle intermediates in adipose tissue in diabetes and that succination of adiponectin may contribute to the decrease in plasma adiponectin in diabetes. Synthesized exclusively by adipocytes and secreted into plasma.

It is found in the secreted. With respect to regulation, polymerization and secretion of adiponectin is inhibited by succination of cysteine residues by the Krebs cycle intermediate fumarate, which leads to S-(2-succinyl)cysteine residues. In terms of biological role, important adipokine involved in the control of fat metabolism and insulin sensitivity, with direct anti-diabetic, anti-atherogenic and anti-inflammatory activities. Stimulates AMPK phosphorylation and activation in the liver and the skeletal muscle, enhancing glucose utilization and fatty-acid combustion. Antagonizes TNF-alpha by negatively regulating its expression in various tissues such as liver and macrophages, and also by counteracting its effects. Inhibits endothelial NF-kappa-B signaling through a cAMP-dependent pathway. May play a role in cell growth, angiogenesis and tissue remodeling by binding and sequestering various growth factors with distinct binding affinities, depending on the type of complex, LMW, MMW or HMW. The chain is Adiponectin (Adipoq) from Mus musculus (Mouse).